The following is a 281-amino-acid chain: sn-glycerol-3-phosphate transport system permease protein UgpE (281 aa).

Transmembrane regions (helical) follow at residues 16-36 (LILG…AATL), 85-105 (FSIT…IVWF), 113-133 (FFWM…FPTV), 142-162 (LDSY…TFLF), 202-222 (ALFV…LLII), and 247-267 (WNSV…IVLV). Residues 77–268 (LLNSFVMAFS…IPPVVIVLVM (192 aa)) form the ABC transmembrane type-1 domain.

This sequence belongs to the binding-protein-dependent transport system permease family. UgpAE subfamily. The complex is composed of two ATP-binding proteins (UgpC), two transmembrane proteins (UgpA and UgpE) and a solute-binding protein (UgpB).

The protein localises to the cell inner membrane. Its function is as follows. Part of the ABC transporter complex UgpBAEC involved in sn-glycerol-3-phosphate (G3P) import. Probably responsible for the translocation of the substrate across the membrane. This is sn-glycerol-3-phosphate transport system permease protein UgpE (ugpE) from Escherichia coli O6:K15:H31 (strain 536 / UPEC).